Consider the following 355-residue polypeptide: Holliday junction branch migration complex subunit RuvB (355 aa).

The segment at 4-190 is large ATPase domain (RuvB-L); the sequence is TDKLAAERII…FGIVARLEFY (187 aa). Residues Leu-29, Arg-30, Gly-71, Lys-74, Thr-75, Thr-76, 137 to 139, Arg-180, Tyr-190, and Arg-227 contribute to the ATP site; that span reads EDY. Thr-75 provides a ligand contact to Mg(2+). The interval 191 to 261 is small ATPAse domain (RuvB-S); the sequence is DADQLARIVR…VADAALAMLD (71 aa). The tract at residues 264 to 355 is head domain (RuvB-H); sequence PVGFDLMDRK…RGMWDTPAGK (92 aa). Positions 300, 319, and 324 each coordinate DNA.

The protein belongs to the RuvB family. In terms of assembly, homohexamer. Forms an RuvA(8)-RuvB(12)-Holliday junction (HJ) complex. HJ DNA is sandwiched between 2 RuvA tetramers; dsDNA enters through RuvA and exits via RuvB. An RuvB hexamer assembles on each DNA strand where it exits the tetramer. Each RuvB hexamer is contacted by two RuvA subunits (via domain III) on 2 adjacent RuvB subunits; this complex drives branch migration. In the full resolvosome a probable DNA-RuvA(4)-RuvB(12)-RuvC(2) complex forms which resolves the HJ.

The protein localises to the cytoplasm. It catalyses the reaction ATP + H2O = ADP + phosphate + H(+). Functionally, the RuvA-RuvB-RuvC complex processes Holliday junction (HJ) DNA during genetic recombination and DNA repair, while the RuvA-RuvB complex plays an important role in the rescue of blocked DNA replication forks via replication fork reversal (RFR). RuvA specifically binds to HJ cruciform DNA, conferring on it an open structure. The RuvB hexamer acts as an ATP-dependent pump, pulling dsDNA into and through the RuvAB complex. RuvB forms 2 homohexamers on either side of HJ DNA bound by 1 or 2 RuvA tetramers; 4 subunits per hexamer contact DNA at a time. Coordinated motions by a converter formed by DNA-disengaged RuvB subunits stimulates ATP hydrolysis and nucleotide exchange. Immobilization of the converter enables RuvB to convert the ATP-contained energy into a lever motion, pulling 2 nucleotides of DNA out of the RuvA tetramer per ATP hydrolyzed, thus driving DNA branch migration. The RuvB motors rotate together with the DNA substrate, which together with the progressing nucleotide cycle form the mechanistic basis for DNA recombination by continuous HJ branch migration. Branch migration allows RuvC to scan DNA until it finds its consensus sequence, where it cleaves and resolves cruciform DNA. The protein is Holliday junction branch migration complex subunit RuvB of Burkholderia ambifaria (strain ATCC BAA-244 / DSM 16087 / CCUG 44356 / LMG 19182 / AMMD) (Burkholderia cepacia (strain AMMD)).